The sequence spans 459 residues: Exodeoxyribonuclease 7 large subunit (459 aa).

It belongs to the XseA family. As to quaternary structure, heterooligomer composed of large and small subunits.

It localises to the cytoplasm. The catalysed reaction is Exonucleolytic cleavage in either 5'- to 3'- or 3'- to 5'-direction to yield nucleoside 5'-phosphates.. Bidirectionally degrades single-stranded DNA into large acid-insoluble oligonucleotides, which are then degraded further into small acid-soluble oligonucleotides. The polypeptide is Exodeoxyribonuclease 7 large subunit (Pseudomonas aeruginosa (strain UCBPP-PA14)).